Reading from the N-terminus, the 169-residue chain is Cell division inhibitor SulA (169 aa).

Over residues 1–15 (MFTSAHANRSAQASA) the composition is skewed to polar residues. A disordered region spans residues 1–22 (MFTSAHANRSAQASASAGHYAH). Positions 106–112 (ALRTGNY) are ftsZ binding. A lon protease binding region spans residues 162-169 (KIHSNLYH).

This sequence belongs to the SulA family. Interacts with FtsZ. Is rapidly cleaved and degraded by the Lon protease once DNA damage is repaired.

Component of the SOS system and an inhibitor of cell division. Accumulation of SulA causes rapid cessation of cell division and the appearance of long, non-septate filaments. In the presence of GTP, binds a polymerization-competent form of FtsZ in a 1:1 ratio, thus inhibiting FtsZ polymerization and therefore preventing it from participating in the assembly of the Z ring. This mechanism prevents the premature segregation of damaged DNA to daughter cells during cell division. This is Cell division inhibitor SulA from Klebsiella pneumoniae (strain 342).